Reading from the N-terminus, the 92-residue chain is Small ribosomal subunit protein uS19 (92 aa).

Belongs to the universal ribosomal protein uS19 family. As to quaternary structure, part of the 30S ribosomal subunit.

Its function is as follows. Protein S19 forms a complex with S13 that binds strongly to the 16S ribosomal RNA. The chain is Small ribosomal subunit protein uS19 (rpsS) from Bacillus subtilis (strain 168).